A 32-amino-acid polypeptide reads, in one-letter code: Lectin (32 aa).

Belongs to the leguminous lectin family. Homotetramer.

Functionally, metalloglycoprotein, containing Ca, Mg, Mn, and Zn and the carbohydrates galactose, glucosamine, mannose, and fucose. It agglutinates erythrocytes of blood group A1. This chain is Lectin, found in Macrotyloma axillare (Perennial horse gram).